The chain runs to 242 residues: Octanoyltransferase (242 aa).

Residues Ser31–Gln206 form the BPL/LPL catalytic domain. Residues Arg70–His77, Ser137–Gly139, and Gly150–Ala152 contribute to the substrate site. Residue Cys168 is the Acyl-thioester intermediate of the active site.

It belongs to the LipB family.

It is found in the cytoplasm. It catalyses the reaction octanoyl-[ACP] + L-lysyl-[protein] = N(6)-octanoyl-L-lysyl-[protein] + holo-[ACP] + H(+). Its pathway is protein modification; protein lipoylation via endogenous pathway; protein N(6)-(lipoyl)lysine from octanoyl-[acyl-carrier-protein]: step 1/2. Its function is as follows. Catalyzes the transfer of endogenously produced octanoic acid from octanoyl-acyl-carrier-protein onto the lipoyl domains of lipoate-dependent enzymes. Lipoyl-ACP can also act as a substrate although octanoyl-ACP is likely to be the physiological substrate. In Coxiella burnetii (strain CbuK_Q154) (Coxiella burnetii (strain Q154)), this protein is Octanoyltransferase.